The chain runs to 317 residues: Aspartate carbamoyltransferase catalytic subunit (317 aa).

Residues Arg-66 and Thr-67 each contribute to the carbamoyl phosphate site. Lys-94 serves as a coordination point for L-aspartate. Carbamoyl phosphate contacts are provided by Arg-116, His-144, and Gln-147. 2 residues coordinate L-aspartate: Arg-177 and Arg-231. The carbamoyl phosphate site is built by Gly-272 and Pro-273.

This sequence belongs to the aspartate/ornithine carbamoyltransferase superfamily. ATCase family. Heterododecamer (2C3:3R2) of six catalytic PyrB chains organized as two trimers (C3), and six regulatory PyrI chains organized as three dimers (R2).

The catalysed reaction is carbamoyl phosphate + L-aspartate = N-carbamoyl-L-aspartate + phosphate + H(+). It participates in pyrimidine metabolism; UMP biosynthesis via de novo pathway; (S)-dihydroorotate from bicarbonate: step 2/3. Its function is as follows. Catalyzes the condensation of carbamoyl phosphate and aspartate to form carbamoyl aspartate and inorganic phosphate, the committed step in the de novo pyrimidine nucleotide biosynthesis pathway. This Nitrobacter winogradskyi (strain ATCC 25391 / DSM 10237 / CIP 104748 / NCIMB 11846 / Nb-255) protein is Aspartate carbamoyltransferase catalytic subunit.